The sequence spans 366 residues: Major outer membrane protein (366 aa).

Positions 1 to 21 (MKKTLLATAIAGAMAASGAQA) are cleaved as a signal peptide.

This sequence belongs to the Gram-negative porin family. As to quaternary structure, homotrimer.

The protein localises to the cell outer membrane. In Halomonas elongata (strain ATCC 33173 / DSM 2581 / NBRC 15536 / NCIMB 2198 / 1H9), this protein is Major outer membrane protein.